A 299-amino-acid chain; its full sequence is Probable lipid kinase YegS (299 aa).

The region spanning 2–133 (AEFPASLLIL…IDMAQVNKQT (132 aa)) is the DAGKc domain. ATP-binding positions include threonine 40, 66–72 (GDGTINE), and threonine 95. Residues leucine 215, aspartate 218, and leucine 220 each coordinate Mg(2+). The active-site Proton acceptor is the glutamate 271.

This sequence belongs to the diacylglycerol/lipid kinase family. YegS lipid kinase subfamily. The cofactor is Mg(2+). Requires Ca(2+) as cofactor.

It localises to the cytoplasm. Probably phosphorylates lipids; the in vivo substrate is unknown. This Shigella boydii serotype 18 (strain CDC 3083-94 / BS512) protein is Probable lipid kinase YegS.